The following is a 446-amino-acid chain: Alkylglycerol monooxygenase (446 aa).

2 helical membrane passes run 39-59 and 103-123; these read VNQA…LGWL and FHFL…FLGV. The 132-residue stretch at 117–248 folds into the Fatty acid hydroxylase domain; the sequence is WLAFLGVDMG…LIIWDRMFGT (132 aa). Residues 131–135 carry the Histidine box-1 motif; it reads HRFAH. Positions 144–148 match the Histidine box-2 motif; that stretch reads HQVHH. A helical transmembrane segment spans residues 167–187; the sequence is FSSWIFYSPLALLIPPSVFAV. The Histidine box-3 signature appears at 220-224; sequence HRVHH. The next 3 membrane-spanning stretches (helical) occupy residues 329–349, 362–382, and 410–430; these read AWSP…LDVY, LTVI…GFLI, and PLLP…TIYW.

Belongs to the sterol desaturase family. TMEM195 subfamily. Fe cation serves as cofactor.

It is found in the endoplasmic reticulum membrane. The catalysed reaction is 1-O-(1,2-saturated-alkyl)-sn-glycerol + (6R)-L-erythro-5,6,7,8-tetrahydrobiopterin + O2 = a 1-(1-hydroxyalkyl)-sn-glycerol + (6R)-L-erythro-6,7-dihydrobiopterin + H2O. Glyceryl-ether monooxygenase that cleaves the O-alkyl bond of ether lipids. Ether lipids are essential components of brain membranes. The sequence is that of Alkylglycerol monooxygenase (agmo) from Danio rerio (Zebrafish).